The sequence spans 151 residues: Ribosome maturation factor RimP (151 aa).

The protein belongs to the RimP family.

Its subcellular location is the cytoplasm. Functionally, required for maturation of 30S ribosomal subunits. The polypeptide is Ribosome maturation factor RimP (Persephonella marina (strain DSM 14350 / EX-H1)).